A 217-amino-acid chain; its full sequence is Elongation factor Ts (217 aa).

The tract at residues threonine 82–valine 85 is involved in Mg(2+) ion dislocation from EF-Tu.

The protein belongs to the EF-Ts family.

The protein resides in the cytoplasm. Its function is as follows. Associates with the EF-Tu.GDP complex and induces the exchange of GDP to GTP. It remains bound to the aminoacyl-tRNA.EF-Tu.GTP complex up to the GTP hydrolysis stage on the ribosome. This chain is Elongation factor Ts, found in Desulfitobacterium hafniense (strain DSM 10664 / DCB-2).